The following is an 841-amino-acid chain: Auxin response factor 24 (841 aa).

The segment at 109–140 (LPEKQQDGNGSGNGNVSKDKVEEEEVVPPAAT) is disordered. The TF-B3 DNA-binding region spans 148 to 250 (FCKTLTASDT…ELRVGVRRAM (103 aa)). Disordered stretches follow at residues 366–397 (PRPDRVSPWQIEPANSPSPVNPLPAPRTKRAR), 663–715 (QDAL…SRSC), and 804–841 (GALNSRSEDSRSTSVERGLVGEGLQGGLSTPSLNSENC). The segment covering 684-695 (AQHDSAREKHQS) has biased composition (basic and acidic residues). Polar residues-rich tracts occupy residues 701–713 (KNIQSKQQNGSSR) and 830–841 (GLSTPSLNSENC). One can recognise a PB1 domain in the interval 713–797 (RSCKKVHKQG…HKIFIYTREE (85 aa)).

Belongs to the ARF family. Homodimers and heterodimers. In terms of tissue distribution, expressed in roots, culms, leaves and young panicles.

The protein resides in the nucleus. Its function is as follows. Auxin response factors (ARFs) are transcriptional factors that bind specifically to the DNA sequence 5'-TGTCTC-3' found in the auxin-responsive promoter elements (AuxREs). This is Auxin response factor 24 (ARF24) from Oryza sativa subsp. japonica (Rice).